A 171-amino-acid polypeptide reads, in one-letter code: Homeobox protein engrailed-1-B (171 aa).

2 disordered regions span residues 1-41 and 60-86; these read EDPG…NAAP and YSDR…KRPR. Over residues 15–29 the composition is skewed to low complexity; the sequence is PDSDTPSDSSKGSDS. The homeobox DNA-binding region spans 82-141; sequence DKRPRTAFTAEQLQRLKAEFQANRYITEQRRQTLAQELSLNESQIKIWFQNKRAKIKKAS.

It belongs to the engrailed homeobox family.

The protein resides in the nucleus. Its function is as follows. Required for proper formation of the apical ectodermal ridge and correct dorsal-ventral patterning in the limb. This chain is Homeobox protein engrailed-1-B (en1-b), found in Xenopus laevis (African clawed frog).